Consider the following 278-residue polypeptide: Coiled-coil domain-containing protein 121 (278 aa).

Coiled coils occupy residues 1–30 (MTDL…REKL) and 105–243 (QAMR…LIQA). The disordered stretch occupies residues 253–278 (QCLNRQDVPKTTPSLPQGTKSRINPK).

The chain is Coiled-coil domain-containing protein 121 (CCDC121) from Homo sapiens (Human).